We begin with the raw amino-acid sequence, 115 residues long: Large ribosomal subunit protein bL20c (115 aa).

This sequence belongs to the bacterial ribosomal protein bL20 family.

The protein resides in the plastid. Its subcellular location is the chloroplast. Binds directly to 23S ribosomal RNA and is necessary for the in vitro assembly process of the 50S ribosomal subunit. It is not involved in the protein synthesizing functions of that subunit. This Chlorella vulgaris (Green alga) protein is Large ribosomal subunit protein bL20c (rpl20).